Here is a 320-residue protein sequence, read N- to C-terminus: Cytosolic Fe-S cluster assembly factor NUBP1 (320 aa).

Residue Met1 is modified to N-acetylmethionine. Cys8, Cys22, Cys25, and Cys31 together coordinate [4Fe-4S] cluster. ATP is bound at residue 62–69 (GKGGVGKS). [4Fe-4S] cluster is bound by residues Cys235 and Cys238.

The protein belongs to the Mrp/NBP35 ATP-binding proteins family. NUBP1/NBP35 subfamily. Heterotetramer of 2 NUBP1 and 2 NUBP2 chains. Interacts with KIFC1. Interacts with the BBS/CCT complex subunit CCT1. The cofactor is [4Fe-4S] cluster.

The protein localises to the cytoplasm. It localises to the nucleus. The protein resides in the cell projection. It is found in the cytoskeleton. Its subcellular location is the cilium axoneme. The protein localises to the cilium basal body. It localises to the microtubule organizing center. The protein resides in the centrosome. It is found in the centriole. Its function is as follows. Component of the cytosolic iron-sulfur (Fe/S) protein assembly (CIA) machinery. Required for maturation of extramitochondrial Fe-S proteins. The NUBP1-NUBP2 heterotetramer forms a Fe-S scaffold complex, mediating the de novo assembly of an Fe-S cluster and its transfer to target apoproteins. Implicated in the regulation of centrosome duplication. Negatively regulates cilium formation and structure. The protein is Cytosolic Fe-S cluster assembly factor NUBP1 of Bos taurus (Bovine).